The following is a 173-amino-acid chain: ATP synthase subunit delta (173 aa).

The protein belongs to the ATPase delta chain family. F-type ATPases have 2 components, F(1) - the catalytic core - and F(0) - the membrane proton channel. F(1) has five subunits: alpha(3), beta(3), gamma(1), delta(1), epsilon(1). F(0) has three main subunits: a(1), b(2) and c(10-14). The alpha and beta chains form an alternating ring which encloses part of the gamma chain. F(1) is attached to F(0) by a central stalk formed by the gamma and epsilon chains, while a peripheral stalk is formed by the delta and b chains.

The protein resides in the cell inner membrane. Its function is as follows. F(1)F(0) ATP synthase produces ATP from ADP in the presence of a proton or sodium gradient. F-type ATPases consist of two structural domains, F(1) containing the extramembraneous catalytic core and F(0) containing the membrane proton channel, linked together by a central stalk and a peripheral stalk. During catalysis, ATP synthesis in the catalytic domain of F(1) is coupled via a rotary mechanism of the central stalk subunits to proton translocation. Functionally, this protein is part of the stalk that links CF(0) to CF(1). It either transmits conformational changes from CF(0) to CF(1) or is implicated in proton conduction. This Campylobacter jejuni subsp. doylei (strain ATCC BAA-1458 / RM4099 / 269.97) protein is ATP synthase subunit delta.